The following is a 228-amino-acid chain: uncharacterized protein (228 aa).

This is an uncharacterized protein from Archaeoglobus fulgidus (strain ATCC 49558 / DSM 4304 / JCM 9628 / NBRC 100126 / VC-16).